We begin with the raw amino-acid sequence, 149 residues long: Transcriptional repressor NrdR (149 aa).

A zinc finger spans residues 3-34; the sequence is CPFCDTEETKVIDSRLVSDGYQVRRRRECGHC. The ATP-cone domain occupies 49-139; the sequence is PKIIKTDGTR…VYLSFDDIDQ (91 aa).

The protein belongs to the NrdR family. The cofactor is Zn(2+).

Its function is as follows. Negatively regulates transcription of bacterial ribonucleotide reductase nrd genes and operons by binding to NrdR-boxes. This is Transcriptional repressor NrdR from Haemophilus influenzae (strain PittEE).